A 489-amino-acid chain; its full sequence is Beta-dihydromenaquinone-9 omega-hydroxylase (489 aa).

Cysteine 435 is a heme binding site.

The protein belongs to the cytochrome P450 family. Heme is required as a cofactor.

It is found in the cytoplasm. It catalyses the reaction beta-dihydromenaquinone-9 + 2 reduced [2Fe-2S]-[ferredoxin] + O2 + 2 H(+) = omega-hydroxy-beta-dihydromenaquinone-9 + 2 oxidized [2Fe-2S]-[ferredoxin] + H2O. Its function is as follows. Involved in the biosynthesis of sulfomenaquinone (SMK, initially named S881 on the basis of its mass), which is localized in the outer envelope of M.bovis and negatively regulates its virulence. Catalyzes the hydroxylation of beta-dihydromenaquinone-9, leading to the formation of omega-hydroxy-beta-dihydromenaquinone-9. The polypeptide is Beta-dihydromenaquinone-9 omega-hydroxylase (cyp128) (Mycobacterium bovis (strain ATCC BAA-935 / AF2122/97)).